A 208-amino-acid polypeptide reads, in one-letter code: Thymidylate kinase (208 aa).

10–17 (GIDGSGKS) is an ATP binding site.

It belongs to the thymidylate kinase family.

The enzyme catalyses dTMP + ATP = dTDP + ADP. Phosphorylation of dTMP to form dTDP in both de novo and salvage pathways of dTTP synthesis. This Jannaschia sp. (strain CCS1) protein is Thymidylate kinase.